The following is a 367-amino-acid chain: Palmitoyltransferase ERF2 (367 aa).

A compositionally biased stretch (polar residues) spans 1-23; sequence MRLHSRQASNPHRQYSAAQSLHS. The disordered stretch occupies residues 1 to 32; it reads MRLHSRQASNPHRQYSAAQSLHSSSDDSEHKE. Over 1 to 87 the chain is Cytoplasmic; the sequence is MRLHSRQASN…GRLRTVAKTK (87 aa). A helical transmembrane segment spans residues 88 to 108; it reads YLSVLVLVMLIAPIVLFSVFE. Residues 109–121 are Lumenal-facing; it reads TGYLWKHVAGAKP. A helical membrane pass occupies residues 122–142; sequence CVVLCYYFWTLCFASFISTGA. The Cytoplasmic segment spans residues 143–229; it reads TDPGTLPRNI…NCIGQRNHRY (87 aa). Residues 185–235 enclose the DHHC domain; that stretch reads KYCTTCRIWRPPRASHCAVCDSCILSFDHHCDWLNNCIGQRNHRYFLAFLF. Catalysis depends on cysteine 215, which acts as the S-palmitoyl cysteine intermediate. The chain crosses the membrane as a helical span at residues 230 to 250; it reads FLAFLFSSVLSSIWLLTCCAL. At 251 to 262 the chain is on the lumenal side; the sequence is KLRHAGSPSAAP. The helical transmembrane segment at 263–283 threads the bilayer; the sequence is VSLLLICYCAVSIWYPLLLAI. The Cytoplasmic segment spans residues 284–367; it reads YHLFLTGTQQ…LPIPHSFEKV (84 aa).

This sequence belongs to the DHHC palmitoyltransferase family. ERF2/ZDHHC9 subfamily. In terms of assembly, interacts with ERF4. Post-translationally, autopalmitoylated.

It localises to the endoplasmic reticulum membrane. It carries out the reaction L-cysteinyl-[protein] + hexadecanoyl-CoA = S-hexadecanoyl-L-cysteinyl-[protein] + CoA. Functionally, the ERF2-ERF4 complex is a palmitoyltransferase specific for Ras proteins. This chain is Palmitoyltransferase ERF2 (ERF2), found in Eremothecium gossypii (strain ATCC 10895 / CBS 109.51 / FGSC 9923 / NRRL Y-1056) (Yeast).